Reading from the N-terminus, the 310-residue chain is Proline iminopeptidase (310 aa).

Positions Leu-41–Glu-288 constitute an AB hydrolase-1 domain. Residue Ser-116 is the Nucleophile of the active site. Asp-255 is a catalytic residue. His-282 serves as the catalytic Proton donor.

The protein belongs to the peptidase S33 family. As to quaternary structure, part of the tricorn proteolytic complex.

The enzyme catalyses Release of N-terminal proline from a peptide.. Functionally, cleaves H-Pro-AMC as well as a wide spectrum of amino acid substrates and several peptide substrates without a proline at the N-terminus. In conjunction with the three factors F1, F2 and F3, Tricorn degrades oligopeptides in a sequential manner, yielding free amino acids. The protein is Proline iminopeptidase (pip) of Saccharolobus solfataricus (strain ATCC 35092 / DSM 1617 / JCM 11322 / P2) (Sulfolobus solfataricus).